A 101-amino-acid polypeptide reads, in one-letter code: Urease subunit beta (101 aa).

This sequence belongs to the urease beta subunit family. In terms of assembly, heterotrimer of UreA (gamma), UreB (beta) and UreC (alpha) subunits. Three heterotrimers associate to form the active enzyme.

The protein resides in the cytoplasm. The enzyme catalyses urea + 2 H2O + H(+) = hydrogencarbonate + 2 NH4(+). The protein operates within nitrogen metabolism; urea degradation; CO(2) and NH(3) from urea (urease route): step 1/1. In Stutzerimonas stutzeri (strain A1501) (Pseudomonas stutzeri), this protein is Urease subunit beta.